Consider the following 382-residue polypeptide: Na(+)/H(+) antiporter NhaA 2 (382 aa).

11 helical membrane passes run Met-7–Leu-27, Leu-58–Leu-78, Ser-94–Ile-114, Gly-124–Gly-144, Leu-153–Phe-173, Leu-178–Tyr-198, Tyr-199–Leu-219, Asn-255–Ile-275, Ile-291–Ile-311, Phe-327–Leu-347, and Leu-361–Val-381.

This sequence belongs to the NhaA Na(+)/H(+) (TC 2.A.33) antiporter family.

It is found in the cell inner membrane. It carries out the reaction Na(+)(in) + 2 H(+)(out) = Na(+)(out) + 2 H(+)(in). Its function is as follows. Na(+)/H(+) antiporter that extrudes sodium in exchange for external protons. The protein is Na(+)/H(+) antiporter NhaA 2 of Campylobacter jejuni (strain RM1221).